The primary structure comprises 663 residues: Innate immunity activator protein (663 aa).

Positions 1–68 (MLQMPKLNEI…RLPTQPGPGW (68 aa)) are disordered. A compositionally biased stretch (low complexity) spans 40-50 (RAQGQAGGARA). Residues 118–147 (AVHKQQRALEARLEACLEELRRLCLREAEL) adopt a coiled-coil conformation. The Nuclear localization signal (NLS) 1 motif lies at 164–170 (PKVRRRI). Disordered regions lie at residues 242-362 (RRRN…ASSL), 378-425 (VPGQ…PRRR), and 444-493 (PLPH…RHRG). A compositionally biased stretch (low complexity) spans 259 to 272 (ELSASDDSSLSDGL). The segment covering 282–298 (PKPPPESPAPPSRPLPP) has biased composition (pro residues). Residues 327-340 (TSLDHPYEKPRKSS) show a composition bias toward basic and acidic residues. Positions 332–338 (PYEKPRK) match the Nuclear localization signal (NLS) 2 motif. A compositionally biased stretch (polar residues) spans 350-361 (ATTPQDGPSASS). The Nuclear localization signal (NLS) 3 signature appears at 422 to 428 (PRRRPTH). Residues 455–475 (EDSGSDVSSISHPTSPGSSSP) show a composition bias toward low complexity.

Interacts with IRAK1, NOD2 and RIPK2; the interaction takes place upon PRR stimulation. Interacts with YWHAQ/14-3-3T; the interaction increases upon PRR stimulation and is required for cellular signaling pathway activation and cytokine secretion. Interacts (via N-terminal domain) with CYTH1 and CYTH2 (via their N-terminal domains). Interacts with FBXW11 and BTRC; associates with SCF E3 ubiquitin-protein ligase complexes. Highly expressed in intestinal myeloid-derived cells and expressed in monocyte-derived macrophages upon induction by PRR activation.

The protein resides in the nucleus. Its subcellular location is the cytoplasm. In terms of biological role, expressed in peripheral macrophages and intestinal myeloid-derived cells, is required for optimal PRR (pattern recognition receptor)-induced signaling, cytokine secretion, and bacterial clearance. Upon stimulation of a broad range of PRRs (pattern recognition receptor) such as NOD2 or TLR2, TLR3, TLR4, TLR5, TLR7 and TLR9, associates with YWHAQ/14-3-3T, which in turn leads to the recruitment and activation of MAP kinases and NF-kappa-B signaling complexes that amplifies PRR-induced downstream signals and cytokine secretion. In the intestine, regulates adherens junction stability by regulating the degradation of CYTH1 and CYTH2, probably acting as substrate cofactor for SCF E3 ubiquitin-protein ligase complexes. Stabilizes adherens junctions by limiting CYTH1-dependent ARF6 activation. The polypeptide is Innate immunity activator protein (Homo sapiens (Human)).